A 425-amino-acid polypeptide reads, in one-letter code: Dihydroorotase (425 aa).

Residues His60 and His62 each contribute to the Zn(2+) site. Residues 62 to 64 and Asn94 contribute to the substrate site; that span reads HLR. Zn(2+)-binding residues include Asp152, His179, and His232. Position 278 (Asn278) interacts with substrate. Residue Asp305 coordinates Zn(2+). Residue Asp305 is part of the active site. His309 is a binding site for substrate.

Belongs to the metallo-dependent hydrolases superfamily. DHOase family. Class I DHOase subfamily. Zn(2+) is required as a cofactor.

The catalysed reaction is (S)-dihydroorotate + H2O = N-carbamoyl-L-aspartate + H(+). It functions in the pathway pyrimidine metabolism; UMP biosynthesis via de novo pathway; (S)-dihydroorotate from bicarbonate: step 3/3. Catalyzes the reversible cyclization of carbamoyl aspartate to dihydroorotate. The protein is Dihydroorotase of Syntrophotalea carbinolica (strain DSM 2380 / NBRC 103641 / GraBd1) (Pelobacter carbinolicus).